The following is a 305-amino-acid chain: tRNA dimethylallyltransferase (305 aa).

14–21 contacts ATP; sequence GPTASGKT. 16–21 is a substrate binding site; that stretch reads TASGKT. Interaction with substrate tRNA regions lie at residues 39 to 42, 163 to 167, and 243 to 248; these read DSAL, QRIIR, and RCVGYR.

The protein belongs to the IPP transferase family. As to quaternary structure, monomer. Requires Mg(2+) as cofactor.

It catalyses the reaction adenosine(37) in tRNA + dimethylallyl diphosphate = N(6)-dimethylallyladenosine(37) in tRNA + diphosphate. In terms of biological role, catalyzes the transfer of a dimethylallyl group onto the adenine at position 37 in tRNAs that read codons beginning with uridine, leading to the formation of N6-(dimethylallyl)adenosine (i(6)A). In Vesicomyosocius okutanii subsp. Calyptogena okutanii (strain HA), this protein is tRNA dimethylallyltransferase.